The chain runs to 696 residues: DNA ligase (696 aa).

NAD(+) contacts are provided by residues 36-40 (DAEYD), 85-86 (SL), and Glu-123. Lys-125 (N6-AMP-lysine intermediate) is an active-site residue. The NAD(+) site is built by Arg-146, Glu-181, Lys-319, and Lys-343. Residues Cys-437, Cys-440, Cys-455, and Cys-461 each coordinate Zn(2+). Residues 618 to 696 (PEGTSLAGKT…EDGLKALLGL (79 aa)) form the BRCT domain.

Belongs to the NAD-dependent DNA ligase family. LigA subfamily. Mg(2+) is required as a cofactor. The cofactor is Mn(2+).

The catalysed reaction is NAD(+) + (deoxyribonucleotide)n-3'-hydroxyl + 5'-phospho-(deoxyribonucleotide)m = (deoxyribonucleotide)n+m + AMP + beta-nicotinamide D-nucleotide.. DNA ligase that catalyzes the formation of phosphodiester linkages between 5'-phosphoryl and 3'-hydroxyl groups in double-stranded DNA using NAD as a coenzyme and as the energy source for the reaction. It is essential for DNA replication and repair of damaged DNA. In Bordetella parapertussis (strain 12822 / ATCC BAA-587 / NCTC 13253), this protein is DNA ligase.